The sequence spans 314 residues: Ecto-ADP-ribosyltransferase 4 (314 aa).

The first 46 residues, 1 to 46 (MGPLINRCKKILLPTTVPPATMRIWLLGGLLPFLLLLSGLQRPTEG), serve as a signal peptide directing secretion. 2 cysteine pairs are disulfide-bonded: C69–C280 and C182–C231. The 186-residue stretch at 91–276 (KNYFRMWQKA…LQLRSTGNLS (186 aa)) folds into the TR mART core domain. A glycan (N-linked (GlcNAc...) asparagine) is linked at N114. Y126 is a binding site for NAD(+). N178 carries an N-linked (GlcNAc...) asparagine glycan. Q206 contacts NAD(+). A glycan (N-linked (GlcNAc...) asparagine) is linked at N222. S240 serves as a coordination point for NAD(+). 2 N-linked (GlcNAc...) asparagine glycosylation sites follow: N257 and N274. A lipid anchor (GPI-anchor amidated alanine) is attached at A285. Residues 286 to 314 (SSKKCIPDPIAIASLSFLTSVIIFSKSRV) constitute a propeptide, removed in mature form.

This sequence belongs to the Arg-specific ADP-ribosyltransferase family. In terms of tissue distribution, expressed in spleen and T-cells.

Its subcellular location is the cell membrane. The enzyme catalyses L-arginyl-[protein] + NAD(+) = N(omega)-(ADP-D-ribosyl)-L-arginyl-[protein] + nicotinamide + H(+). This is Ecto-ADP-ribosyltransferase 4 (ART4) from Homo sapiens (Human).